The primary structure comprises 397 residues: Elongation factor Tu (397 aa).

The tr-type G domain occupies 10 to 206; the sequence is KPHVNIGTIG…AVDEYIPTPE (197 aa). A G1 region spans residues 19–26; it reads GHIDHGKT. Position 19–26 (19–26) interacts with GTP; sequence GHIDHGKT. Thr-26 lines the Mg(2+) pocket. The G2 stretch occupies residues 62 to 66; that stretch reads GITIS. The tract at residues 83 to 86 is G3; that stretch reads DCPG. GTP contacts are provided by residues 83-87 and 138-141; these read DCPGH and NKCD. Positions 138–141 are G4; sequence NKCD. Residues 176 to 178 form a G5 region; sequence AAF.

It belongs to the TRAFAC class translation factor GTPase superfamily. Classic translation factor GTPase family. EF-Tu/EF-1A subfamily. As to quaternary structure, monomer.

Its subcellular location is the cytoplasm. The catalysed reaction is GTP + H2O = GDP + phosphate + H(+). Its function is as follows. GTP hydrolase that promotes the GTP-dependent binding of aminoacyl-tRNA to the A-site of ribosomes during protein biosynthesis. In Nocardioides sp. (strain ATCC BAA-499 / JS614), this protein is Elongation factor Tu.